The chain runs to 67 residues: DNA-directed RNA polymerase subunit omega (67 aa).

This sequence belongs to the RNA polymerase subunit omega family. In terms of assembly, the RNAP catalytic core consists of 2 alpha, 1 beta, 1 beta' and 1 omega subunit. When a sigma factor is associated with the core the holoenzyme is formed, which can initiate transcription.

The enzyme catalyses RNA(n) + a ribonucleoside 5'-triphosphate = RNA(n+1) + diphosphate. Promotes RNA polymerase assembly. Latches the N- and C-terminal regions of the beta' subunit thereby facilitating its interaction with the beta and alpha subunits. The chain is DNA-directed RNA polymerase subunit omega from Variovorax paradoxus (strain S110).